A 588-amino-acid chain; its full sequence is Progranulin (588 aa).

Residues 1-17 (MWILVSWLALVARLVAG) form the signal peptide. An N-linked (GlcNAc...) asparagine glycan is attached at N38. 12 disulfide bridges follow: C125–C138, C132–C148, C281–C293, C287–C303, C294–C311, C304–C318, C312–C325, C319–C332, C363–C375, C369–C385, C394–C407, and C401–C413. N372 carries N-linked (GlcNAc...) asparagine glycosylation. A glycan (N-linked (GlcNAc...) asparagine) is linked at N525.

Belongs to the granulin family. Progranulin is secreted as a homodimer. Interacts with SLPI; interaction protects progranulin from proteolysis. Interacts (via region corresponding to granulin-7 peptide) with CTSD; stabilizes CTSD and increases its proteolytic activity. Interacts (via region corresponding to granulin-7 peptide) with SORT1; this interaction mediates endocytosis and lysosome delivery of progranulin; interaction occurs at the neuronal cell surface in a stressed nervous system. Interacts with PSAP; facilitates lysosomal delivery of progranulin from the extracellular space and the biosynthetic pathway. Forms a complex with PSAP and M6PR; PSAP bridges the binding between progranulin and M6PR. Forms a complex with PSAP and SORT1; progranulin bridges the interaction between PSAP and SORT1; facilitates lysosomal targeting of PSAP via SORT1; interaction enhances PSAP uptake in primary cortical neurons. Interacts (via regions corresponding to granulin-2 and granulin-7 peptides) with GBA1; this interaction prevents aggregation of GBA1-SCARB2 complex via interaction with HSPA1A upon stress. Interacts (via region corresponding to granulin-7 peptide) with HSPA1A; mediates recruitment of HSPA1A to GBA1 and prevents GBA1 aggregation in response to stress. Post-translationally, cleaved by ELANE; proteolysis is blocked by SLPI and is concentration- and time-dependent and induces CXCL8/IL-8 production; granulin-3 and granulin-4 are resistant to ELANE. Cleaved by CTSL in lysosome thus regulating the maturation and turnover of progranulin within the lysosome. Ubiquitous; most abundant in the spleen and several tissues of endocrine significance.

The protein localises to the secreted. It is found in the lysosome. Functionally, secreted protein that acts as a key regulator of lysosomal function and as a growth factor involved in inflammation, wound healing and cell proliferation. Regulates protein trafficking to lysosomes, and also the activity of lysosomal enzymes. Also facilitates the acidification of lysosomes, causing degradation of mature CTSD by CTSB. In addition, functions as a wound-related growth factor that acts directly on dermal fibroblasts and endothelial cells to promote division, migration and the formation of capillary-like tubule structures. Also promotes epithelial cell proliferation by blocking TNF-mediated neutrophil activation preventing release of oxidants and proteases. Moreover, modulates inflammation in neurons by preserving neurons survival, axonal outgrowth and neuronal integrity. In terms of biological role, inhibits epithelial cell proliferation and induces epithelial cells to secrete IL-8. Stabilizes CTSD through interaction with CTSD leading to maintain its aspartic-type peptidase activity. The protein is Progranulin (Grn) of Rattus norvegicus (Rat).